We begin with the raw amino-acid sequence, 374 residues long: ATPase ASNA1 homolog (374 aa).

Lys-44–Thr-51 serves as a coordination point for ATP. Asp-73 is a catalytic residue. Residues Glu-244 and Asn-271 each coordinate ATP.

This sequence belongs to the arsA ATPase family. In terms of assembly, homodimer.

The protein resides in the cytoplasm. Its subcellular location is the endoplasmic reticulum. ATPase required for the post-translational delivery of tail-anchored (TA) proteins to the endoplasmic reticulum. Recognizes and selectively binds the transmembrane domain of TA proteins in the cytosol. This complex then targets to the endoplasmic reticulum by membrane-bound receptors, where the tail-anchored protein is released for insertion. This process is regulated by ATP binding and hydrolysis. ATP binding drives the homodimer towards the closed dimer state, facilitating recognition of newly synthesized TA membrane proteins. ATP hydrolysis is required for insertion. Subsequently, the homodimer reverts towards the open dimer state, lowering its affinity for the membrane-bound receptor, and returning it to the cytosol to initiate a new round of targeting. This Plasmodium vivax (strain Salvador I) protein is ATPase ASNA1 homolog.